The sequence spans 387 residues: DNA double-strand break repair protein Mre11 (387 aa).

4 residues coordinate Mn(2+): D9, H11, D50, and N85. Catalysis depends on H86, which acts as the Proton donor. H150, D181, and H183 together coordinate Mn(2+). Residues 365–387 (AVLDDDADAADDDGRPTTVEEFQ) form a disordered region. Residues 366–375 (VLDDDADAAD) show a composition bias toward acidic residues.

This sequence belongs to the MRE11/RAD32 family. As to quaternary structure, homodimer. Forms a heterotetramer composed of two Mre11 subunits and two Rad50 subunits. Mn(2+) serves as cofactor.

With respect to regulation, nuclease activity is regulated by Rad50. In terms of biological role, part of the Rad50/Mre11 complex, which is involved in the early steps of DNA double-strand break (DSB) repair. Mre11 binds to DSB ends and has both double-stranded 3'-5' exonuclease activity and single-stranded endonuclease activity. This Halobacterium salinarum (strain ATCC 700922 / JCM 11081 / NRC-1) (Halobacterium halobium) protein is DNA double-strand break repair protein Mre11.